A 364-amino-acid chain; its full sequence is Aminomethyltransferase (364 aa).

It belongs to the GcvT family. In terms of assembly, the glycine cleavage system is composed of four proteins: P, T, L and H.

The catalysed reaction is N(6)-[(R)-S(8)-aminomethyldihydrolipoyl]-L-lysyl-[protein] + (6S)-5,6,7,8-tetrahydrofolate = N(6)-[(R)-dihydrolipoyl]-L-lysyl-[protein] + (6R)-5,10-methylene-5,6,7,8-tetrahydrofolate + NH4(+). Its function is as follows. The glycine cleavage system catalyzes the degradation of glycine. The protein is Aminomethyltransferase of Shewanella sp. (strain ANA-3).